An 892-amino-acid chain; its full sequence is Alanine--tRNA ligase (892 aa).

Zn(2+)-binding residues include histidine 574, histidine 578, cysteine 676, and histidine 680.

The protein belongs to the class-II aminoacyl-tRNA synthetase family. The cofactor is Zn(2+).

It is found in the cytoplasm. It carries out the reaction tRNA(Ala) + L-alanine + ATP = L-alanyl-tRNA(Ala) + AMP + diphosphate. In terms of biological role, catalyzes the attachment of alanine to tRNA(Ala) in a two-step reaction: alanine is first activated by ATP to form Ala-AMP and then transferred to the acceptor end of tRNA(Ala). Also edits incorrectly charged Ser-tRNA(Ala) and Gly-tRNA(Ala) via its editing domain. This Prochlorococcus marinus (strain MIT 9313) protein is Alanine--tRNA ligase.